The sequence spans 359 residues: Peptide chain release factor 1 (359 aa).

Gln233 bears the N5-methylglutamine mark.

Belongs to the prokaryotic/mitochondrial release factor family. In terms of processing, methylated by PrmC. Methylation increases the termination efficiency of RF1.

It localises to the cytoplasm. Functionally, peptide chain release factor 1 directs the termination of translation in response to the peptide chain termination codons UAG and UAA. The sequence is that of Peptide chain release factor 1 from Ruminiclostridium cellulolyticum (strain ATCC 35319 / DSM 5812 / JCM 6584 / H10) (Clostridium cellulolyticum).